A 204-amino-acid polypeptide reads, in one-letter code: MAGRRSRNNDITVDILLRAYSAGLFPMADSADDPELFWVEPEIRGIIPLDDFHVSKSLAKAMRKKPFAIRFNTAFEDVMAGCAAEAADRPSTWINATIRRLYTELHQIGHAHSVEAWEGDELVGGLYGVSLGAAFFGESMFSRRTNASKICLVHLVERLNAKGFVLLDTQFTTEHLKTFGAIDVPKLDYARMLDLAVNRPSLQF.

Belongs to the L/F-transferase family.

The protein resides in the cytoplasm. It catalyses the reaction N-terminal L-lysyl-[protein] + L-leucyl-tRNA(Leu) = N-terminal L-leucyl-L-lysyl-[protein] + tRNA(Leu) + H(+). It carries out the reaction N-terminal L-arginyl-[protein] + L-leucyl-tRNA(Leu) = N-terminal L-leucyl-L-arginyl-[protein] + tRNA(Leu) + H(+). The catalysed reaction is L-phenylalanyl-tRNA(Phe) + an N-terminal L-alpha-aminoacyl-[protein] = an N-terminal L-phenylalanyl-L-alpha-aminoacyl-[protein] + tRNA(Phe). Its function is as follows. Functions in the N-end rule pathway of protein degradation where it conjugates Leu, Phe and, less efficiently, Met from aminoacyl-tRNAs to the N-termini of proteins containing an N-terminal arginine or lysine. The polypeptide is Leucyl/phenylalanyl-tRNA--protein transferase (Agrobacterium fabrum (strain C58 / ATCC 33970) (Agrobacterium tumefaciens (strain C58))).